We begin with the raw amino-acid sequence, 368 residues long: Flagellar P-ring protein (368 aa).

The N-terminal stretch at 1–24 (MTLTRPLALISALAALILALPADA) is a signal peptide.

This sequence belongs to the FlgI family. In terms of assembly, the basal body constitutes a major portion of the flagellar organelle and consists of four rings (L,P,S, and M) mounted on a central rod.

The protein resides in the periplasm. Its subcellular location is the bacterial flagellum basal body. Functionally, assembles around the rod to form the L-ring and probably protects the motor/basal body from shearing forces during rotation. The polypeptide is Flagellar P-ring protein (Methylobacillus flagellatus (strain ATCC 51484 / DSM 6875 / VKM B-1610 / KT)).